The primary structure comprises 242 residues: HTH-type transcriptional regulator GadW (242 aa).

One can recognise an HTH araC/xylS-type domain in the interval 139–236 (GKVERLISFD…GVTPHQFAQH (98 aa)). DNA-binding regions (H-T-H motif) lie at residues 156–177 (RDIA…QDEN) and 203–226 (LHTI…RQYY).

Homodimer.

Functionally, depending on the conditions (growth phase and medium), acts as a positive or negative regulator of gadA and gadBC. Repression occurs directly or via the repression of the expression of gadX. Activation occurs directly by the binding of GadW to the gadA and gadBC promoters. The protein is HTH-type transcriptional regulator GadW (gadW) of Escherichia coli (strain K12).